Consider the following 304-residue polypeptide: Germ cell-specific gene 1-like protein (304 aa).

At 1–8 (MKTTRKCR) the chain is on the cytoplasmic side. A helical transmembrane segment spans residues 9–29 (ALLSVGLNLLALLFSTTAFIT). Over 30 to 112 (TYWCEGTQRV…FIDLAPASER (83 aa)) the chain is Extracellular. The helical transmembrane segment at 113–133 (GVLWLSVVSEVLYIMLLVVGF) threads the bilayer. Residues 134–153 (SLMCLELFHSSNVIDGLKLN) are Cytoplasmic-facing. The helical transmembrane segment at 154 to 174 (AFAAVFTVLSGLLGMVAHMMY) threads the bilayer. At 175–197 (TQVFQITVSLGPEDWRPHTWDYG) the chain is on the extracellular side. The chain crosses the membrane as a helical span at residues 198–218 (WSFCMAWGSFTCCMAASVTTL). Residues 219–304 (NSYTKTVIEF…NTESLGEEQC (86 aa)) lie on the Cytoplasmic side of the membrane. Positions 266-278 (VDVYPSHGSSHGN) are enriched in polar residues. The disordered stretch occupies residues 266–304 (VDVYPSHGSSHGNSRGKMRSPPAPVDQGDNTESLGEEQC).

Belongs to the GSG1 family. In terms of assembly, component of the AMPAR complex.

It is found in the cell membrane. Its subcellular location is the synapse. Functionally, as a component of the AMPAR complex, modifies AMPA receptor (AMPAR) gating. The chain is Germ cell-specific gene 1-like protein (gsg1l) from Danio rerio (Zebrafish).